Here is a 240-residue protein sequence, read N- to C-terminus: UDP-2,3-diacylglucosamine hydrolase (240 aa).

The Mn(2+) site is built by D8, H10, D41, N78, and H113. Residue 78-79 coordinates substrate; that stretch reads NR. Substrate contacts are provided by D121, S159, N163, K166, and H194. 2 residues coordinate Mn(2+): H194 and H196.

The protein belongs to the LpxH family. Mn(2+) serves as cofactor.

It localises to the cell inner membrane. It carries out the reaction UDP-2-N,3-O-bis[(3R)-3-hydroxytetradecanoyl]-alpha-D-glucosamine + H2O = 2-N,3-O-bis[(3R)-3-hydroxytetradecanoyl]-alpha-D-glucosaminyl 1-phosphate + UMP + 2 H(+). It participates in glycolipid biosynthesis; lipid IV(A) biosynthesis; lipid IV(A) from (3R)-3-hydroxytetradecanoyl-[acyl-carrier-protein] and UDP-N-acetyl-alpha-D-glucosamine: step 4/6. Its function is as follows. Hydrolyzes the pyrophosphate bond of UDP-2,3-diacylglucosamine to yield 2,3-diacylglucosamine 1-phosphate (lipid X) and UMP by catalyzing the attack of water at the alpha-P atom. Involved in the biosynthesis of lipid A, a phosphorylated glycolipid that anchors the lipopolysaccharide to the outer membrane of the cell. The sequence is that of UDP-2,3-diacylglucosamine hydrolase from Shewanella baltica (strain OS185).